Reading from the N-terminus, the 572-residue chain is E3 SUMO-protein ligase PIAS2 (572 aa).

Residues 11–45 enclose the SAP domain; sequence VSSFRVSELQVLLGFAGRNKSGRKHDLLMRALHLL. The short motif at 19-23 is the LXXLL motif element; sequence LQVLL. Residues K46 and K249 each participate in a glycyl lysine isopeptide (Lys-Gly) (interchain with G-Cter in SUMO2) cross-link. The PINIT domain maps to 134–299; the sequence is QPSPPIPPVH…SMSVYLVRQL (166 aa). An SP-RING-type zinc finger spans residues 331 to 412; sequence PDSEIATTSL…FMEILNDCSD (82 aa). 4 residues coordinate Zn(2+): C362, H364, C385, and C388. Residues K430, K435, K443, and K452 each participate in a glycyl lysine isopeptide (Lys-Gly) (interchain with G-Cter in SUMO2) cross-link. The tract at residues 467–473 is SUMO1-binding; it reads IDVIDLT. 3 positions are modified to phosphoserine: S476, S477, and S478. Residues 484–492 carry the Nuclear localization signal motif; the sequence is PPAKRKCIF. A Glycyl lysine isopeptide (Lys-Gly) (interchain with G-Cter in SUMO2) cross-link involves residue K489. S499 carries the phosphoserine modification. K502 participates in a covalent cross-link: Glycyl lysine isopeptide (Lys-Gly) (interchain with G-Cter in SUMO2). Residues 523–572 are disordered; it reads AAIPPSLTDYSVPFHHTPVSSMSSDLPGEQRRNDINNEVQLGTSSDTVQQ. Residues 558–572 show a composition bias toward polar residues; that stretch reads NNEVQLGTSSDTVQQ.

Belongs to the PIAS family. As to quaternary structure, binds SUMO1 and UBE2I. Interacts with AXIN1, JUN, MDM2, PARK7, TP53 and TP73 isoform alpha, but not TP73 isoform beta. Interacts with STAT4 following IL12 and IFN-alpha stimulation of T-cells. Interacts also with GTF2I, GTF2IRD1, IKFZ1, DAB2 and MSX2, as well as with several steroid receptors, including ESR1, ESR2, NR3C1, PGR, AR, and with NCOA2. Sumoylation of a target protein seems to enhance the interaction. Binds to sumoylated ELK1. Binds DNA, such as CDKN1A promoter, in a sequence-specific manner. Interacts with PLAG1. Interacts with KLF8; the interaction results in SUMO ligation and repression of KLF8 transcriptional activity and of its cell cycle progression into G(1) phase. Interacts with IFIH1/MDA5. Interacts with PML. Interacts with PRDM1. Sumoylated. As to expression, mainly expressed in testis.

It is found in the nucleus speckle. It localises to the nucleus. Its subcellular location is the PML body. It participates in protein modification; protein sumoylation. Functions as an E3-type small ubiquitin-like modifier (SUMO) ligase, stabilizing the interaction between UBE2I and the substrate, and as a SUMO-tethering factor. Plays a crucial role as a transcriptional coregulation in various cellular pathways, including the STAT pathway, the p53 pathway and the steroid hormone signaling pathway. The effects of this transcriptional coregulation, transactivation or silencing may vary depending upon the biological context and PIAS2 isoform studied. However, it seems to be mostly involved in gene silencing. Binds to sumoylated ELK1 and enhances its transcriptional activity by preventing recruitment of HDAC2 by ELK1, thus reversing SUMO-mediated repression of ELK1 transactivation activity. Sumoylates PML at'Lys-65' and 'Lys-160'. The polypeptide is E3 SUMO-protein ligase PIAS2 (Pias2) (Rattus norvegicus (Rat)).